Here is a 906-residue protein sequence, read N- to C-terminus: Patched domain-containing protein 3 (906 aa).

The segment at 1–70 (MISSKVAPGE…LGQEAPPPRR (70 aa)) is disordered. N-linked (GlcNAc...) asparagine glycans are attached at residues Asn148 and Asn235. 11 helical membrane-spanning segments follow: residues 338 to 358 (TVIPLFHLAYILIILFAVVSC), 370 to 390 (VAVFGVFSVAMSVVSGFGLML), 392 to 412 (LGVPFVIIVANSPFLILGVGV), 442 to 462 (VAVSITITTITNVLAFYTGIT), 476 to 496 (GTTLLFCYFYSITCFGAVMAL), 559 to 579 (FIVVLLYIFYIISSIYGCFQV), 760 to 780 (VMIASTAMFIVSLLLIPHPVC), 782 to 802 (LWVTFAIASVIVGVTGFMAFW), 814 to 834 (LVICIGFSFDFSAHISYAFVS), 848 to 868 (LYLLGYPVLQSAISTIIGVCV), and 883 to 903 (IMFLVMFFGAAHGLIFIPVFL). The region spanning 339 to 496 (VIPLFHLAYI…ITCFGAVMAL (158 aa)) is the SSD domain.

This sequence belongs to the patched family. As to expression, expressed in germ cells of the testis (at protein level).

The protein resides in the cell projection. It localises to the cilium. Its subcellular location is the flagellum membrane. The protein localises to the endoplasmic reticulum membrane. Functionally, may play a role in sperm development or sperm function. However, does not appear to have an essential role in spermatogenesis or male fertility. In Mus musculus (Mouse), this protein is Patched domain-containing protein 3 (Ptchd3).